A 185-amino-acid polypeptide reads, in one-letter code: Small ribosomal subunit protein uS7 (185 aa).

It belongs to the universal ribosomal protein uS7 family. As to quaternary structure, part of the 30S ribosomal subunit.

In terms of biological role, one of the primary rRNA binding proteins, it binds directly to 16S rRNA where it nucleates assembly of the head domain of the 30S subunit. Is located at the subunit interface close to the decoding center. The chain is Small ribosomal subunit protein uS7 from Methanothrix thermoacetophila (strain DSM 6194 / JCM 14653 / NBRC 101360 / PT) (Methanosaeta thermophila).